The primary structure comprises 161 residues: Nucleotide-binding protein Bcenmc03_2579 (161 aa).

Belongs to the YajQ family.

Nucleotide-binding protein. The sequence is that of Nucleotide-binding protein Bcenmc03_2579 from Burkholderia orbicola (strain MC0-3).